The primary structure comprises 264 residues: Heavy metal-associated isoprenylated plant protein 17 (264 aa).

HMA domains follow at residues 32-95 and 133-204; these read VTDA…KKIE and IMEV…KERQ. Residues 185 to 218 adopt a coiled-coil conformation; sequence SRKLNKKMHQKIKKAEKERQEWESEMMLREAEEE. Cysteine 261 carries the cysteine methyl ester modification. A lipid anchor (S-farnesyl cysteine) is attached at cysteine 261. A propeptide spans 262 to 264 (removed in mature form); it reads SIS.

The protein belongs to the HIPP family.

Probable heavy-metal-binding protein. This chain is Heavy metal-associated isoprenylated plant protein 17, found in Arabidopsis thaliana (Mouse-ear cress).